Reading from the N-terminus, the 980-residue chain is Putative helicase 087L (980 aa).

Positions 59–246 constitute a Helicase ATP-binding domain; sequence INPHTLYDGV…IDLFNLILRT (188 aa). 72–79 lines the ATP pocket; sequence HEMGTGKT. The DEAH box motif lies at 189-192; sequence DEAH. One can recognise a Helicase C-terminal domain in the interval 389 to 546; that stretch reads RLSFVFSEFV…SIDLHMYEIA (158 aa).

Belongs to the IIV-6 022L family. SNF2/RAD54 helicase subfamily.

The sequence is that of Putative helicase 087L from Invertebrate iridescent virus 3 (IIV-3).